Consider the following 231-residue polypeptide: uncharacterized protein (231 aa).

6 consecutive transmembrane segments (helical) span residues 4-24 (YIIY…LQIS), 29-49 (SMIF…LVIG), 58-78 (AGNA…ALPL), 95-115 (TVVI…LLLG), 147-167 (VTAV…YLVL), and 211-231 (LCGI…YFFV).

The protein belongs to the YohK (E.coli)/YwbG (IPA-22R) (B.subtilis) family.

It is found in the cell membrane. This is an uncharacterized protein from Haemophilus influenzae (strain ATCC 51907 / DSM 11121 / KW20 / Rd).